Consider the following 84-residue polypeptide: UPF0457 protein BC_3525 (84 aa).

This sequence belongs to the UPF0457 family.

The chain is UPF0457 protein BC_3525 from Bacillus cereus (strain ATCC 14579 / DSM 31 / CCUG 7414 / JCM 2152 / NBRC 15305 / NCIMB 9373 / NCTC 2599 / NRRL B-3711).